Reading from the N-terminus, the 126-residue chain is UPF0344 protein ABC2900 (126 aa).

A run of 4 helical transmembrane segments spans residues 16 to 36 (ASHE…YFLF), 43 to 63 (AGTI…VTGA), 66 to 86 (LIAY…VLLI), and 104 to 124 (GMLF…YGII).

The protein belongs to the UPF0344 family.

It localises to the cell membrane. This Shouchella clausii (strain KSM-K16) (Alkalihalobacillus clausii) protein is UPF0344 protein ABC2900.